A 646-amino-acid chain; its full sequence is Peptidylprolyl isomerase domain and WD repeat-containing protein 1 (646 aa).

The disordered stretch occupies residues 1–30; sequence MAAESGSDFQQRRRRRRDPEEPEKTELSER. Alanine 2 is subject to N-acetylalanine. Residues 17 to 30 are compositionally biased toward basic and acidic residues; it reads RDPEEPEKTELSER. WD repeat units follow at residues 80–118, 124–162, 168–208, 213–252, 271–309, 345–386, and 401–453; these read ASMY…FWKK, EFVK…VFDV, INML…IYDG, QPLH…YWTG, TDLY…IFRF, AVER…VETN, and MQLA…MFTK. Basic and acidic residues predominate over residues 455–478; it reads EPEDTKSADSDRDVFNEKPSKEEV. The disordered stretch occupies residues 455 to 490; sequence EPEDTKSADSDRDVFNEKPSKEEVMAATQAEGPKRV. Residues 490-645 enclose the PPIase cyclophilin-type domain; it reads VSDSAIIHTS…EDVSIINITV (156 aa).

It belongs to the cyclophilin-type PPIase family. PPIL1 subfamily. As to quaternary structure, identified in the spliceosome C complex.

The protein resides in the nucleus. The catalysed reaction is [protein]-peptidylproline (omega=180) = [protein]-peptidylproline (omega=0). With respect to regulation, inhibited by cyclosporin A (CsA). Functionally, PPIase that catalyzes the cis-trans isomerization of proline imidic peptide bonds in oligopeptides and may therefore assist protein folding. May be involved in pre-mRNA splicing. This chain is Peptidylprolyl isomerase domain and WD repeat-containing protein 1, found in Homo sapiens (Human).